The primary structure comprises 205 residues: Outer-membrane lipoprotein LolB (205 aa).

Positions 1–17 (MRLRLFLAASALALLSG) are cleaved as a signal peptide. A lipid anchor (N-palmitoyl cysteine) is attached at cysteine 18. Residue cysteine 18 is the site of S-diacylglycerol cysteine attachment.

Belongs to the LolB family. In terms of assembly, monomer.

The protein resides in the cell outer membrane. Its function is as follows. Plays a critical role in the incorporation of lipoproteins in the outer membrane after they are released by the LolA protein. In Pseudomonas aeruginosa (strain LESB58), this protein is Outer-membrane lipoprotein LolB.